A 352-amino-acid chain; its full sequence is MSYQAEYIWIDGTEPEPLMRSKTRIIKDGKEPEIWGFDGSSTNQAPGSNSDCVLRPVFETPDPIRGGDNRLVLCEVQLTDFTPPTNTRAAALGVAERYADMSPMFGIEQEYTFFKDGRPYGWPEVGYPAPQGPYYCGVGGSKMPGRQIVERHTQACLDAGLAIEGTNAEVMMGQWEFQIGVLPAPAIGDQIWLGRWLLHRIAEDYGVEVSFAAKPIPGDWNGAGAHTNFSTKQTMEGWDAIVTCCEALGTRVTEHVTHYGKGIEDRLTGKHETAPWNKYSWGASDRGASVRIPWAVEKAKKGWLEDRRPNANMDPYLVTALMIDTCCSALAGDKPTLFVPSQTTPAPAEASV.

The GS beta-grasp domain maps to 3–82 (YQAEYIWIDG…LCEVQLTDFT (80 aa)). The 266-residue stretch at 87–352 (TRAAALGVAE…TTPAPAEASV (266 aa)) folds into the GS catalytic domain. Glu108 and Glu110 together coordinate Mg(2+). Residue Glu164 coordinates ATP. Mg(2+)-binding residues include Glu169 and Glu176. Position 272 (Glu272) interacts with L-glutamate.

The protein belongs to the glutamine synthetase family. Homooctamer and homotetramer. Mg(2+) is required as a cofactor.

The protein resides in the cytoplasm. The catalysed reaction is L-glutamate + NH4(+) + ATP = L-glutamine + ADP + phosphate + H(+). In terms of biological role, catalyzes the ATP-dependent biosynthesis of glutamine from glutamate and ammonia. The chain is Glutamine synthetase from Frankia alni.